The primary structure comprises 377 residues: Protein ECM9 (377 aa).

In terms of biological role, may be involved in cell wall organization and biogenesis. The sequence is that of Protein ECM9 (ECM9) from Saccharomyces cerevisiae (strain ATCC 204508 / S288c) (Baker's yeast).